A 270-amino-acid chain; its full sequence is Mediator of RNA polymerase II transcription subunit 4 (270 aa).

A disordered region spans residues 1-25 (MAAASSGEKEKERPGGGLGAAGGNS). At Ala2 the chain carries N-acetylalanine. Coiled coils occupy residues 24–48 (NSTR…IEML) and 90–131 (HHEM…AKEK). Residue Ser32 is modified to Phosphoserine. The interval 231 to 270 (MLPPNHSHDFLLEPPGHNKENEDDVEVMSTDSSSSSSDSD) is disordered. A compositionally biased stretch (basic and acidic residues) spans 236-250 (HSHDFLLEPPGHNKE). Residues 259–270 (STDSSSSSSDSD) show a composition bias toward low complexity.

The protein belongs to the Mediator complex subunit 4 family. Component of the Mediator complex, which is composed of MED1, MED4, MED6, MED7, MED8, MED9, MED10, MED11, MED12, MED13, MED13L, MED14, MED15, MED16, MED17, MED18, MED19, MED20, MED21, MED22, MED23, MED24, MED25, MED26, MED27, MED29, MED30, MED31, CCNC, CDK8 and CDC2L6/CDK11. The MED12, MED13, CCNC and CDK8 subunits form a distinct module termed the CDK8 module. Mediator containing the CDK8 module is less active than Mediator lacking this module in supporting transcriptional activation. Individual preparations of the Mediator complex lacking one or more distinct subunits have been variously termed ARC, CRSP, DRIP, PC2, SMCC and TRAP.

It localises to the nucleus. In terms of biological role, component of the Mediator complex, a coactivator involved in the regulated transcription of nearly all RNA polymerase II-dependent genes. Mediator functions as a bridge to convey information from gene-specific regulatory proteins to the basal RNA polymerase II transcription machinery. Mediator is recruited to promoters by direct interactions with regulatory proteins and serves as a scaffold for the assembly of a functional preinitiation complex with RNA polymerase II and the general transcription factors. This chain is Mediator of RNA polymerase II transcription subunit 4 (MED4), found in Bos taurus (Bovine).